Reading from the N-terminus, the 322-residue chain is tRNA U34 carboxymethyltransferase (322 aa).

Carboxy-S-adenosyl-L-methionine-binding positions include Lys90, Trp104, Lys109, Gly129, 151-153 (DPT), 180-181 (IE), Met195, Tyr199, and Arg314.

It belongs to the class I-like SAM-binding methyltransferase superfamily. CmoB family. Homotetramer.

It carries out the reaction carboxy-S-adenosyl-L-methionine + 5-hydroxyuridine(34) in tRNA = 5-carboxymethoxyuridine(34) in tRNA + S-adenosyl-L-homocysteine + H(+). Functionally, catalyzes carboxymethyl transfer from carboxy-S-adenosyl-L-methionine (Cx-SAM) to 5-hydroxyuridine (ho5U) to form 5-carboxymethoxyuridine (cmo5U) at position 34 in tRNAs. This chain is tRNA U34 carboxymethyltransferase, found in Citrobacter koseri (strain ATCC BAA-895 / CDC 4225-83 / SGSC4696).